We begin with the raw amino-acid sequence, 469 residues long: Acetyl-CoA decarbonylase/synthase complex subunit beta 1 (469 aa).

Positions 189, 192, 278, and 280 each coordinate [Ni-Fe-S] cluster.

The protein belongs to the CdhC family. As to quaternary structure, monomer. The ACDS complex is made up of alpha, epsilon, beta, gamma and delta chains with a probable stoichiometry of (alpha(2)epsilon(2))(4)-beta(8)-(gamma(1)delta(1))(8) (Potential). [Ni-Fe-S] cluster serves as cofactor.

It catalyses the reaction Co(I)-[corrinoid Fe-S protein] + acetyl-CoA + H(+) = methyl-Co(III)-[corrinoid Fe-S protein] + CO + CoA. It participates in one-carbon metabolism; methanogenesis from acetate. Part of a complex that catalyzes the reversible cleavage of acetyl-CoA, allowing growth on acetate as sole source of carbon and energy. The alpha-epsilon complex generates CO from CO(2), while the beta subunit (this protein) combines the CO with CoA and a methyl group to form acetyl-CoA. The methyl group, which is incorporated into acetyl-CoA, is transferred to the beta subunit by a corrinoid iron-sulfur protein (the gamma-delta complex). This chain is Acetyl-CoA decarbonylase/synthase complex subunit beta 1 (cdhC1), found in Methanosarcina thermophila.